Reading from the N-terminus, the 505-residue chain is Histidine ammonia-lyase (505 aa).

Positions 141–143 form a cross-link, 5-imidazolinone (Ala-Gly); it reads ASG. Ser142 is modified (2,3-didehydroalanine (Ser)).

This sequence belongs to the PAL/histidase family. Post-translationally, contains an active site 4-methylidene-imidazol-5-one (MIO), which is formed autocatalytically by cyclization and dehydration of residues Ala-Ser-Gly.

The protein resides in the cytoplasm. It carries out the reaction L-histidine = trans-urocanate + NH4(+). It participates in amino-acid degradation; L-histidine degradation into L-glutamate; N-formimidoyl-L-glutamate from L-histidine: step 1/3. This is Histidine ammonia-lyase from Bacillus cereus (strain ZK / E33L).